The sequence spans 611 residues: Elongation factor 1 alpha-like protein (611 aa).

2 disordered regions span residues 1–21 (MAYSDYSDGADDMPDFHDEGE) and 105–138 (SISQQRPNDRLPDWLDEEESEGERNGEEANDEKT). Position 124 is a phosphoserine (Ser124). A compositionally biased stretch (basic and acidic residues) spans 126 to 138 (GERNGEEANDEKT). Positions 165-390 (LPHLSFVVLG…LENAAFKISK (226 aa)) constitute a tr-type G domain. Residues 174 to 181 (GHVDAGKS) form a G1 region. Residue 174-181 (GHVDAGKS) coordinates GTP. The segment at 230 to 234 (GVTVS) is G2. A G3 region spans residues 251–254 (DAPG). GTP contacts are provided by residues 313 to 316 (NKMD) and 352 to 354 (SGF). The segment at 313 to 316 (NKMD) is G4. Residues 352–354 (SGF) are G5.

Belongs to the TRAFAC class translation factor GTPase superfamily. Classic translation factor GTPase family. As to quaternary structure, component of the Dom34-Hbs1 complex, also named Pelota-HBS1L complex, composed of DOM34 and HBS1.

Its subcellular location is the cytoplasm. It carries out the reaction GTP + H2O = GDP + phosphate + H(+). Its function is as follows. GTPase component of the Dom34-Hbs1 complex, a complex that recognizes stalled ribosomes and triggers the No-Go Decay (NGD) pathway. The Dom34-Hbs1 complex recognizes ribosomes stalled at the 3' end of an mRNA and engages stalled ribosomes by destabilizing mRNA in the mRNA channel. Following ribosome-binding, the Pelota-HBS1L complex promotes the disassembly of stalled ribosomes, followed by degradation of damaged mRNAs as part of the NGD pathway. The Dom34-Hbs1 complex is also involved in non-functional rRNA decay. This chain is Elongation factor 1 alpha-like protein, found in Saccharomyces cerevisiae (strain ATCC 204508 / S288c) (Baker's yeast).